The following is a 452-amino-acid chain: Probable ECA polymerase (452 aa).

11 helical membrane-spanning segments follow: residues 6 to 26 (FSGLLVVWLLSTLFIATLTWF), 37 to 57 (VFFSLLFLLTFFFGFPLTSVL), 63 to 83 (VGVAPPEILLQALLSAACFYG), 118 to 138 (VILMGIALVSVAIFFMHNGFL), 155 to 175 (GVALKRFFYFFIPAMLVVYFL), 181 to 201 (AWLFFLVSTVAFGLLTYMIVG), 207 to 227 (IIIAFAIFLFIGIIRGWISLW), 228 to 248 (MLAAAGVLGIVGMFWLALKRY), 341 to 361 (LVVMGGALFIPLGAIVVGLII), 378 to 398 (YKAAILHSFCFGAIFNMIVLA), and 410 to 430 (VFFLVVFGASLLVAKLLFWLF).

Belongs to the WzyE family. As to quaternary structure, probably part of a complex composed of WzxE, WzyE and WzzE.

It is found in the cell inner membrane. The protein operates within bacterial outer membrane biogenesis; enterobacterial common antigen biosynthesis. Probably involved in the polymerization of enterobacterial common antigen (ECA) trisaccharide repeat units. This chain is Probable ECA polymerase, found in Salmonella typhi.